A 228-amino-acid chain; its full sequence is Protein CWC15 homolog A (228 aa).

A disordered region spans residues 1–126 (MTTAARPTFE…DEDSDDDTAA (126 aa)). Positions 24-34 (SQLSKQYSSRD) are enriched in polar residues. Positions 52 to 84 (EEVRSRDFRRELEERERVVARDKNRDRPTREHT) are enriched in basic and acidic residues. Residues 102-124 (DADDPLTDEDGDEDSDEDSDDDT) show a composition bias toward acidic residues. Residues 121 to 165 (DDDTAALLAELEKIKKERAEEKDRKELEQKAEEERIRMENILSGN) are a coiled coil.

Belongs to the CWC15 family. Identified in the spliceosome C complex. Component of the minor spliceosome, which splices U12-type introns.

It is found in the nucleus. Involved in pre-mRNA splicing as component of the spliceosome. In Xenopus laevis (African clawed frog), this protein is Protein CWC15 homolog A (cwc15-a).